Reading from the N-terminus, the 1259-residue chain is Ankyrin repeat and sterile alpha motif domain-containing protein 1B (1259 aa).

ANK repeat units follow at residues Gly2 to Leu31, Ser58 to Val87, Lys91 to Arg120, Glu127 to Ile156, Lys160 to Ser189, Arg193 to Cys222, and Glu225 to Ile254. A disordered region spans residues His298–Thr325. The span at Glu306–Thr325 shows a compositional bias: polar residues. Phosphoserine is present on residues Ser310, Ser311, Ser315, Ser353, and Ser364. Disordered stretches follow at residues Glu367 to Pro401, Pro490 to Thr513, Cys556 to Pro614, and Thr631 to Val661. Over residues Asn371–Leu384 the composition is skewed to polar residues. Thr503 carries the post-translational modification Phosphothreonine. Ser507 and Ser510 each carry phosphoserine. Residues Cys556–Thr574 are compositionally biased toward low complexity. Over residues Thr575–Asp587 the composition is skewed to basic and acidic residues. Position 738 is a phosphoserine (Ser738). The segment at Val753 to Thr776 is disordered. Thr772 is modified (phosphothreonine). Phosphoserine is present on Ser774. SAM domains are found at residues Cys809–Met875 and Tyr883–Asp948. Phosphotyrosine is present on Tyr900. A short sequence motif (nuclear localization signal) is located at residue His934. Residues Gly943–Asp988 are disordered. A compositionally biased stretch (low complexity) spans Thr968 to Thr983. Ser973 is subject to Phosphoserine. Tyr1006 bears the Phosphotyrosine mark. In terms of domain architecture, PID spans Ile1055–Ile1212. The disordered stretch occupies residues His1196 to Arg1216.

Interacts with EPHA8. Isoform 2 interacts with COIL.

It is found in the cytoplasm. The protein resides in the nucleus. It localises to the postsynaptic density. Its subcellular location is the cell projection. The protein localises to the dendritic spine. Isoform 2 may participate in the regulation of nucleoplasmic coilin protein interactions in neuronal and transformed cells. This Mus musculus (Mouse) protein is Ankyrin repeat and sterile alpha motif domain-containing protein 1B (Anks1b).